Reading from the N-terminus, the 1092-residue chain is Fibrinogen-binding protein (1092 aa).

Residues 1 to 51 (MINKKNNLLTKKKPIANKSNKYAIRKFTVGTASIVIGATLLFGLGHNEAKA) form the signal peptide. Over residues 50-63 (KAEENSVQDVKDSN) the composition is skewed to basic and acidic residues. A disordered region spans residues 50-236 (KAEENSVQDV…GYTNIDEKIS (187 aa)). The segment at 52–599 (EENSVQDVKD…GQGQGDLPPE (548 aa)) is ligand binding A region. The span at 64–76 (TDDELSDSNDQSS) shows a compositional bias: acidic residues. Residues 84-98 (INNNQSINTDDNNQI) are compositionally biased toward low complexity. Over residues 99–119 (IKKEETNNYDGIEKRSEDRTE) the composition is skewed to basic and acidic residues. Positions 120–140 (STTNVDENEATFLQKTPQDNT) are enriched in polar residues. Basic and acidic residues predominate over residues 141-151 (HLTEEEVKESS). Over residues 160-170 (IDTAQQPSHTT) the composition is skewed to polar residues. Positions 195 to 220 (KIKESNTESGKEENTIEQPNKVKEDS) are enriched in basic and acidic residues. 4 residues coordinate Ca(2+): glutamate 294, serine 299, valine 302, and glutamate 309. Residues 579-590 (YDNTIAFSTSSG) are interaction with human fibrinogen. CNA-B domains are found at residues 600–713 (KTYK…YQTP) and 714–824 (KYSL…YDDE). Residues 780-1068 (KPSGMTQTTT…NEDYGSKGTL (289 aa)) form a disordered region. The segment covering 791–801 (SGDDDEQDADG) has biased composition (acidic residues). Residues 802-814 (EEVHVTITDHDDF) are compositionally biased toward basic and acidic residues. The span at 820 to 1039 (YYDDESDSDS…DSDSDSDNDS (220 aa)) shows a compositional bias: acidic residues. The LPXTG sorting signal signature appears at 1053–1057 (LPDTG). Threonine 1056 carries the post-translational modification Pentaglycyl murein peptidoglycan amidated threonine. Positions 1057-1092 (GANEDYGSKGTLLGTLFAGLGALLLGKRRKNRKNKN) are cleaved as a propeptide — removed by sortase.

This sequence belongs to the serine-aspartate repeat-containing protein (SDr) family.

Its subcellular location is the secreted. It is found in the cell wall. In terms of biological role, promotes bacterial attachment to both soluble and immobilized forms of fibrinogen in a dose-dependent manner. This binding occurs through the beta-chain of human fibrinogen. Could contribute to the initiation of foreign-body infection by allowing bacteria to adhere to biomaterial surfaces that have become coated with host proteins after implantation. Is important in the pathogenesis of central venous catheter (CVC)-associated infection model. The polypeptide is Fibrinogen-binding protein (fbe) (Staphylococcus epidermidis).